Reading from the N-terminus, the 212-residue chain is dTTP/UTP pyrophosphatase (212 aa).

The active-site Proton acceptor is the D88.

The protein belongs to the Maf family. YhdE subfamily. A divalent metal cation is required as a cofactor.

The protein localises to the cytoplasm. It catalyses the reaction dTTP + H2O = dTMP + diphosphate + H(+). It carries out the reaction UTP + H2O = UMP + diphosphate + H(+). Functionally, nucleoside triphosphate pyrophosphatase that hydrolyzes dTTP and UTP. May have a dual role in cell division arrest and in preventing the incorporation of modified nucleotides into cellular nucleic acids. The protein is dTTP/UTP pyrophosphatase of Colwellia psychrerythraea (strain 34H / ATCC BAA-681) (Vibrio psychroerythus).